The chain runs to 118 residues: uncharacterized protein (118 aa).

This is an uncharacterized protein from Caenorhabditis elegans.